The primary structure comprises 328 residues: Glutathionyl-hydroquinone reductase YqjG (328 aa).

C63 (nucleophile) is an active-site residue. Glutathione is bound by residues W96, R130–V133, and E148–S149. The GST C-terminal domain maps to P172–Y296. Y195 acts as the Proton donor/acceptor in catalysis. The segment at Q203 to I311 is dimerization.

This sequence belongs to the GST superfamily. Xi-class GSH transferase family. As to quaternary structure, homodimer.

It carries out the reaction 2-(glutathione-S-yl)-hydroquinone + glutathione = hydroquinone + glutathione disulfide. Its function is as follows. Catalyzes glutathione (GSH)-dependent reduction of glutathionyl-hydroquinones (GS-HQs) to the corresponding hydroquinones. Can use a variety of GS-HQs as substrates, such as GS-p-hydroquinone (GS-HQ), GS-hydroxy-p-hydroquinone (GS-HHQ), GS-methyl-p-hydroquinone (GS-MHQ), GS-menadiol, and GS-trichloro-p-hydroquinone (GS-TriCH). Also displays GSH-dependent disulfide-bond reduction activity toward HED (2-hydroxyethyl disulfide), and is able to catalyze DMA (dimethylarsinate) reduction. Exhibits no GSH transferase activity with 1-chloro-2,4-dinitrobenzene (CDNB). This chain is Glutathionyl-hydroquinone reductase YqjG (yqjG), found in Escherichia coli (strain K12).